A 620-amino-acid polypeptide reads, in one-letter code: Chaperone protein HscA homolog (620 aa).

It belongs to the heat shock protein 70 family.

Its function is as follows. Chaperone involved in the maturation of iron-sulfur cluster-containing proteins. Has a low intrinsic ATPase activity which is markedly stimulated by HscB. The sequence is that of Chaperone protein HscA homolog from Shewanella baltica (strain OS155 / ATCC BAA-1091).